The primary structure comprises 266 residues: 3-oxoadipate enol-lactonase 1 (266 aa).

Positions P28–Q250 constitute an AB hydrolase-1 domain.

The catalysed reaction is (4,5-dihydro-5-oxofuran-2-yl)-acetate + H2O = 3-oxoadipate + H(+). The protein operates within aromatic compound metabolism; beta-ketoadipate pathway; 3-oxoadipate from 5-oxo-4,5-dihydro-2-furylacetate: step 1/1. The sequence is that of 3-oxoadipate enol-lactonase 1 (pcaD) from Acinetobacter baylyi (strain ATCC 33305 / BD413 / ADP1).